A 389-amino-acid chain; its full sequence is ATP-dependent (S)-NAD(P)H-hydrate dehydratase (389 aa).

The region spanning 53–389 is the YjeF C-terminal domain; that stretch reads TLQLVRNIIP…RGGGRLPQAL (337 aa). The residue at position 85 (Tyr85) is a Phosphotyrosine. Residues Glu153 and 205-211 each bind (6S)-NADPHX; that span reads NHMEFSR. Residues 245–249 and 264–273 contribute to the ATP site; these read KGERD and GSSRRCGGQG. Position 274 (Asp274) interacts with (6S)-NADPHX. 2 disordered regions span residues 316–350 and 369–389; these read KTRA…PGGC and RSLH…PQAL.

The protein belongs to the NnrD/CARKD family. Mg(2+) serves as cofactor.

It localises to the mitochondrion. The enzyme catalyses (6S)-NADHX + ATP = ADP + phosphate + NADH + H(+). The catalysed reaction is (6S)-NADPHX + ATP = ADP + phosphate + NADPH + H(+). Its function is as follows. Catalyzes the dehydration of the S-form of NAD(P)HX at the expense of ATP, which is converted to ADP. Together with NAD(P)HX epimerase, which catalyzes the epimerization of the S- and R-forms, the enzyme allows the repair of both epimers of NAD(P)HX, a damaged form of NAD(P)H that is a result of enzymatic or heat-dependent hydration. In Macaca mulatta (Rhesus macaque), this protein is ATP-dependent (S)-NAD(P)H-hydrate dehydratase.